The sequence spans 126 residues: Profilin-3 (126 aa).

This sequence belongs to the profilin family. As to quaternary structure, occurs in many kinds of cells as a complex with monomeric actin in a 1:1 ratio. In embryos, expression is specifically detected in body wall muscle cells. In adults, expression is localized to a striking dot-like fashion in body wall muscle.

The protein localises to the cytoplasm. It localises to the cytoskeleton. In terms of biological role, binds to actin and affects the structure of the cytoskeleton. At high concentrations, profilin prevents the polymerization of actin, whereas it enhances it at low concentrations. By binding to PIP2, it inhibits the formation of IP3 and DG. Also binds to poly(L-proline) and phosphatidylinositol 4,5-bisphosphate micelles. This Caenorhabditis elegans protein is Profilin-3 (pfn-3).